The following is a 345-amino-acid chain: Cytoplasmic envelopment protein 2 (345 aa).

The interval 26–35 (KLVGKSRKHR) is nuclear localization signal 1. A nuclear export signal region spans residues 55-63 (CILCQLLLL). The tract at residues 90–94 (RRRRR) is nuclear localization signal 2.

This sequence belongs to the herpesviridae cytoplasmic envelopment protein 2 family. In terms of assembly, interacts with cytoplasmic envelopment protein 3 and with the capsid. Interacts with host STING1; this interaction prevents viral DNA-triggered antiviral immune response.

Its subcellular location is the virion tegument. The protein resides in the host cytoplasm. It is found in the host nucleus. Its function is as follows. Plays a critical role in cytoplasmic virus egress. Participates in the final step of tegumentation and envelope acquisition within the host cytoplasm by directly interacting with the capsid. Upon virion binding to target cell, a signaling cascade is triggered to disrupt the interaction with the capsid, thereby preparing capsid uncoating. Additionally, antagonizes the viral DNA-triggered antiviral immune response by targeting host STING1 and preventing its dimerization and trafficking. The chain is Cytoplasmic envelopment protein 2 (UL94) from Human cytomegalovirus (strain AD169) (HHV-5).